We begin with the raw amino-acid sequence, 215 residues long: Cytochrome c biogenesis ATP-binding export protein CcmA (215 aa).

The ABC transporter domain occupies 3–215 (LEAENLAGER…MAAFSVEDIA (213 aa)). 35–42 (GPNGSGKS) is an ATP binding site.

This sequence belongs to the ABC transporter superfamily. CcmA exporter (TC 3.A.1.107) family. The complex is composed of two ATP-binding proteins (CcmA) and two transmembrane proteins (CcmB).

It is found in the cell inner membrane. It catalyses the reaction heme b(in) + ATP + H2O = heme b(out) + ADP + phosphate + H(+). Its function is as follows. Part of the ABC transporter complex CcmAB involved in the biogenesis of c-type cytochromes; once thought to export heme, this seems not to be the case, but its exact role is uncertain. Responsible for energy coupling to the transport system. This is Cytochrome c biogenesis ATP-binding export protein CcmA from Brucella abortus (strain 2308).